A 92-amino-acid polypeptide reads, in one-letter code: Small ribosomal subunit protein bS18 (92 aa).

The segment at 1 to 28 is disordered; that stretch reads MTQQGNSGERKPRGKGPKRPRKPKVDPF. A compositionally biased stretch (basic residues) spans 12–22; the sequence is PRGKGPKRPRK.

This sequence belongs to the bacterial ribosomal protein bS18 family. As to quaternary structure, part of the 30S ribosomal subunit. Forms a tight heterodimer with protein bS6.

Its function is as follows. Binds as a heterodimer with protein bS6 to the central domain of the 16S rRNA, where it helps stabilize the platform of the 30S subunit. This is Small ribosomal subunit protein bS18 from Deinococcus radiodurans (strain ATCC 13939 / DSM 20539 / JCM 16871 / CCUG 27074 / LMG 4051 / NBRC 15346 / NCIMB 9279 / VKM B-1422 / R1).